Here is a 426-residue protein sequence, read N- to C-terminus: Lipoyl synthase, mitochondrial (426 aa).

The transit peptide at 1-29 (MASPAPLQRLQAPLRRSLARAAVLSSRTY) directs the protein to the mitochondrion. Polar residues predominate over residues 27-42 (RTYATIPSPSDPGLTQ). A disordered region spans residues 27 to 61 (RTYATIPSPSDPGLTQSSPSPAASTTPAKKAPRPS). The span at 43 to 55 (SSPSPAASTTPAK) shows a compositional bias: low complexity. Positions 140, 145, 151, 171, 175, 178, and 388 each coordinate [4Fe-4S] cluster. The Radical SAM core domain maps to 154–377 (GNDKSAATAT…KQRALDMGFL (224 aa)).

It belongs to the radical SAM superfamily. Lipoyl synthase family. Requires [4Fe-4S] cluster as cofactor.

The protein resides in the mitochondrion. The enzyme catalyses [[Fe-S] cluster scaffold protein carrying a second [4Fe-4S](2+) cluster] + N(6)-octanoyl-L-lysyl-[protein] + 2 oxidized [2Fe-2S]-[ferredoxin] + 2 S-adenosyl-L-methionine + 4 H(+) = [[Fe-S] cluster scaffold protein] + N(6)-[(R)-dihydrolipoyl]-L-lysyl-[protein] + 4 Fe(3+) + 2 hydrogen sulfide + 2 5'-deoxyadenosine + 2 L-methionine + 2 reduced [2Fe-2S]-[ferredoxin]. The protein operates within protein modification; protein lipoylation via endogenous pathway; protein N(6)-(lipoyl)lysine from octanoyl-[acyl-carrier-protein]: step 2/2. Catalyzes the radical-mediated insertion of two sulfur atoms into the C-6 and C-8 positions of the octanoyl moiety bound to the lipoyl domains of lipoate-dependent enzymes, thereby converting the octanoylated domains into lipoylated derivatives. This is Lipoyl synthase, mitochondrial from Podospora anserina (strain S / ATCC MYA-4624 / DSM 980 / FGSC 10383) (Pleurage anserina).